Here is a 1171-residue protein sequence, read N- to C-terminus: Phytochrome B (1171 aa).

Residues Met-1–Ala-19 are compositionally biased toward low complexity. Positions Met-1 to Ala-53 are disordered. Gly residues predominate over residues Ala-38–Ala-52. Residues Asp-259 to Leu-442 enclose the GAF domain. Phytochromobilin is bound at residue Cys-364. PAS domains follow at residues Val-661 to Asp-732 and Asp-795 to Leu-866. The 219-residue stretch at Tyr-943–Gln-1161 folds into the Histidine kinase domain.

The protein belongs to the phytochrome family. Homodimer. Post-translationally, contains one covalently linked phytochromobilin chromophore.

In terms of biological role, regulatory photoreceptor which exists in two forms that are reversibly interconvertible by light: the Pr form that absorbs maximally in the red region of the spectrum and the Pfr form that absorbs maximally in the far-red region. Photoconversion of Pr to Pfr induces an array of morphogenic responses, whereas reconversion of Pfr to Pr cancels the induction of those responses. Pfr controls the expression of a number of nuclear genes including those encoding the small subunit of ribulose-bisphosphate carboxylase, chlorophyll A/B binding protein, protochlorophyllide reductase, rRNA, etc. It also controls the expression of its own gene(s) in a negative feedback fashion. This Oryza sativa subsp. indica (Rice) protein is Phytochrome B (PHYB).